The sequence spans 768 residues: Translation factor GUF1 homolog, mitochondrial (768 aa).

The N-terminal 29 residues, methionine 1–cysteine 29, are a transit peptide targeting the mitochondrion. Positions serine 110 to serine 293 constitute a tr-type G domain. Residues alanine 119–threonine 126, aspartate 184–histidine 188, and threonine 238–aspartate 241 contribute to the GTP site.

The protein belongs to the TRAFAC class translation factor GTPase superfamily. Classic translation factor GTPase family. LepA subfamily.

Its subcellular location is the mitochondrion inner membrane. The catalysed reaction is GTP + H2O = GDP + phosphate + H(+). Promotes mitochondrial protein synthesis. May act as a fidelity factor of the translation reaction, by catalyzing a one-codon backward translocation of tRNAs on improperly translocated ribosomes. Binds to mitochondrial ribosomes in a GTP-dependent manner. This Trypanosoma brucei brucei (strain 927/4 GUTat10.1) protein is Translation factor GUF1 homolog, mitochondrial.